Reading from the N-terminus, the 98-residue chain is NADH-ubiquinone oxidoreductase chain 4L (98 aa).

3 helical membrane passes run 1–21 (MSLT…GLLM), 31–51 (LCLE…VLTI), and 61–81 (IILL…LVVV).

It belongs to the complex I subunit 4L family. Core subunit of respiratory chain NADH dehydrogenase (Complex I) which is composed of 45 different subunits.

It is found in the mitochondrion inner membrane. It catalyses the reaction a ubiquinone + NADH + 5 H(+)(in) = a ubiquinol + NAD(+) + 4 H(+)(out). In terms of biological role, core subunit of the mitochondrial membrane respiratory chain NADH dehydrogenase (Complex I) which catalyzes electron transfer from NADH through the respiratory chain, using ubiquinone as an electron acceptor. Part of the enzyme membrane arm which is embedded in the lipid bilayer and involved in proton translocation. In Chalinolobus tuberculatus (New Zealand long-tailed bat), this protein is NADH-ubiquinone oxidoreductase chain 4L (MT-ND4L).